The chain runs to 519 residues: Cytochrome P450 monooxygenase easM (519 aa).

A helical transmembrane segment spans residues 16 to 33 (VAPALFASSISVLFLILS). Asn-50 and Asn-353 each carry an N-linked (GlcNAc...) asparagine glycan. Cys-458 is a heme binding site.

The protein belongs to the cytochrome P450 family. Requires heme as cofactor.

It is found in the membrane. The protein operates within alkaloid biosynthesis; ergot alkaloid biosynthesis. Its function is as follows. Cytochrome P450 monooxygenase; part of the gene cluster that mediates the biosynthesis of fumiclavanine C, a fungal ergot alkaloid. DmaW catalyzes the first step of ergot alkaloid biosynthesis by condensing dimethylallyl diphosphate (DMAP) and tryptophan to form 4-dimethylallyl-L-tryptophan. The second step is catalyzed by the methyltransferase easF that methylates 4-dimethylallyl-L-tryptophan in the presence of S-adenosyl-L-methionine, resulting in the formation of 4-dimethylallyl-L-abrine. The catalase easC and the FAD-dependent oxidoreductase easE then transform 4-dimethylallyl-L-abrine to chanoclavine-I which is further oxidized by EasD in the presence of NAD(+), resulting in the formation of chanoclavine-I aldehyde. EasA reduces chanoclavine-I aldehyde to dihydrochanoclavine-I aldehyde that spontaneously dehydrates to form 6,8-dimethyl-6,7-didehydroergoline. EasG then catalyzes the reduction of 6,8-dimethyl-6,7-didehydroergoline to form festuclavine. Hydrolysis of festuclavine by easM then leads to the formation of fumigaclavine B which is in turn acetylated by easN to fumigaclavine A. Finally, easL catalyzes the conversion of fumigaclavine A into fumigaclavine C by attaching a dimethylallyl moiety to C-2 of the indole nucleus. The chain is Cytochrome P450 monooxygenase easM from Aspergillus fumigatus (strain ATCC MYA-4609 / CBS 101355 / FGSC A1100 / Af293) (Neosartorya fumigata).